We begin with the raw amino-acid sequence, 238 residues long: Lactate utilization protein A (238 aa).

The protein belongs to the LutA/YkgE family.

In terms of biological role, is involved in L-lactate degradation and allows cells to grow with lactate as the sole carbon source. The chain is Lactate utilization protein A from Bacillus licheniformis (strain ATCC 14580 / DSM 13 / JCM 2505 / CCUG 7422 / NBRC 12200 / NCIMB 9375 / NCTC 10341 / NRRL NRS-1264 / Gibson 46).